We begin with the raw amino-acid sequence, 398 residues long: 1,4-beta-D-glucan cellobiohydrolase CEL6C (398 aa).

An N-terminal signal peptide occupies residues 1-18; the sequence is MKITSSAAALALVASAVA. N70 is a glycosylation site (N-linked (GlcNAc...) asparagine). Residue D125 is part of the active site. Catalysis depends on D170, which acts as the Proton donor. Substrate is bound by residues W218, W318, K346, and E350.

Belongs to the glycosyl hydrolase 6 (cellulase B) family. In terms of processing, both N- and O-glycosylated.

Its subcellular location is the secreted. It carries out the reaction Hydrolysis of (1-&gt;4)-beta-D-glucosidic linkages in cellulose and cellotetraose, releasing cellobiose from the non-reducing ends of the chains.. In terms of biological role, exoglucanase that plays an important function in biomass degradation by catalyzing the hydrolysis of the non-reducing end beta-1,4-glucosidic linkages in cellulose and cellotetraose to release cellobiose. Hydrolyzes crystalline and amorphous cellulose but is inactive on hydroxyethyl cellulose, mannan, galactomannan, xyloglucan, arabinoxylan, arabinan, xylan, and pectin. This is 1,4-beta-D-glucan cellobiohydrolase CEL6C from Podospora anserina (strain S / ATCC MYA-4624 / DSM 980 / FGSC 10383) (Pleurage anserina).